We begin with the raw amino-acid sequence, 199 residues long: Pectinesterase inhibitor 4 (199 aa).

The first 25 residues, 1 to 25, serve as a signal peptide directing secretion; the sequence is MLRFVVLSLTLMVFINSSNFPKTAA. Residues Asn16, Asn33, Asn43, and Asn83 are each glycosylated (N-linked (GlcNAc...) asparagine). Cysteines 42 and 51 form a disulfide. Residues Cys109 and Cys158 are joined by a disulfide bond.

Belongs to the PMEI family. In terms of assembly, binds reversibly to PME3 to inhibit its activity; the stability of the PME3-PMEI4 complex and the inhibition of the pectin methylesterase (PME) activity is pH-dependent, based on protonation status of amino-acids at the complex interface. As to expression, expressed in outer cell layer of roots, particularly in the root-hair zone. Expressed in roots and siliques.

The protein localises to the secreted. It is found in the extracellular space. Its subcellular location is the apoplast. In terms of biological role, pectin methylesterase (PME) inhibitor that can target the root-expressed PME17 and PME3 in a pH-dependent manner, mainly in slightly acidic conditions (pH 6.3 and 5.0) but not at pH 7.5; this processus relies on changes in the protonation of amino acids involved in intermolecular and intramolecular interactions. Regulate de-methylesterification of pectins in roots and affects root growth. This chain is Pectinesterase inhibitor 4, found in Arabidopsis thaliana (Mouse-ear cress).